The sequence spans 505 residues: Cholesteryl ester transfer protein (505 aa).

The first 24 residues, Met1–Ala24, serve as a signal peptide directing secretion. N-linked (GlcNAc...) asparagine glycosylation is found at Asn68 and Asn114. Residues Cys169 and Cys210 are joined by a disulfide bond. N-linked (GlcNAc...) asparagine glycans are attached at residues Asn266, Asn344, and Asn422.

This sequence belongs to the BPI/LBP/Plunc superfamily. BPI/LBP family. Highly expressed in liver brain, heart, and spleen. Secreted in plasma.

The protein localises to the secreted. It catalyses the reaction cholesteryl (9Z-octadecenoate)(in) = cholesteryl (9Z-octadecenoate)(out). It carries out the reaction 1,2,3-tri-(9Z-octadecenoyl)-glycerol(in) = 1,2,3-tri-(9Z-octadecenoyl)-glycerol(out). The catalysed reaction is cholesteryl (9Z,12Z)-octadecadienoate(in) = cholesteryl (9Z,12Z)-octadecadienoate(out). Its function is as follows. Involved in the transfer of neutral lipids, including cholesteryl ester and triglyceride, among lipoprotein particles. Allows the net movement of cholesteryl ester from high density lipoproteins/HDL to triglyceride-rich very low density lipoproteins/VLDL, and the equimolar transport of triglyceride from VLDL to HDL. Regulates the reverse cholesterol transport, by which excess cholesterol is removed from peripheral tissues and returned to the liver for elimination. In Gallus gallus (Chicken), this protein is Cholesteryl ester transfer protein.